The primary structure comprises 1120 residues: Topless-related protein 1 (1120 aa).

The LisH domain occupies 4–36; the sequence is LSRELVFLILQFLDEEKFKETVHKLEQESGFFF. A CTLH domain is found at 34–92; the sequence is FFFNMKYFEDEVHNGNWDEVEKYLSGFTKVDDNRYSMKIFFEIRKQKYLEALDRHDRPK. 2 disordered regions span residues 210–235 and 283–307; these read ARAP…PLGA and HPRT…SKRT. Position 214 is a phosphoserine (serine 214). 14 WD repeats span residues 353–393, 415–454, 460–501, 504–545, 548–591, 595–634, 639–678, 699–745, 755–794, 822–860, 863–903, 906–945, 999–1038, and 1052–1091; these read SQGS…RLVQ, EPVV…DMRQ, AHVG…KRYT, GHEA…SRVD, APGR…VKRT, FHKR…LLTA, GGLQ…RLLH, ERPA…EPSQ, MRVT…RNAT, NPEE…TMAT, PPPP…VKSK, GHSK…KQKS, ESAA…LRCR, and SNVH…GKWG. Residues 1087-1120 form a disordered region; that stretch reads EGKWGVAPPPENGSASAVTATPSVGASASDQPQR. The segment covering 1099–1120 has biased composition (polar residues); it reads GSASAVTATPSVGASASDQPQR.

As to quaternary structure, tetramer. Interacts with SNC1 (via TIR domain) and HDA19. Interacts with SPL (via EAR motif). Interacts with SPEAR3/TIE1. Binds to and corepresses GAF1/IDD2. In terms of tissue distribution, highly expressed in stamen primordium, microsporocyte, ovule primordium and megasporocyte during sporogenesis.

Its subcellular location is the nucleus. Its function is as follows. Transcriptional corepressor. Activates TIR-NB-LRR R protein-mediated immune responses through repression of negative regulators such as CNGC2/DND1. Negative regulator of jasmonate responses. This chain is Topless-related protein 1 (TPR1), found in Arabidopsis thaliana (Mouse-ear cress).